A 326-amino-acid chain; its full sequence is Ribosomal large subunit pseudouridine synthase D (326 aa).

Residues 18–91 (QRLDQALAEM…IPLDIVYEDE (74 aa)) form the S4 RNA-binding domain. Aspartate 139 is an active-site residue.

Belongs to the pseudouridine synthase RluA family. In terms of assembly, in late stage pre-50S ribosomal subunit interacts with ObgE and DarP(YjgA).

The protein localises to the cytoplasm. It carries out the reaction uridine(1911/1915/1917) in 23S rRNA = pseudouridine(1911/1915/1917) in 23S rRNA. In terms of biological role, responsible for synthesis of pseudouridine from uracil at positions 1911, 1915 and 1917 in 23S ribosomal RNA. Other positions are not modified. Uridine isomerization occurs as a late step during the assembly of the large ribosomal subunit. Member of a network of 50S ribosomal subunit biogenesis factors (ObgE, RluD, RsfS and DarP(YjgA)) which assembles along the 30S-50S interface, allowing 23S rRNA modification and preventing incorrect 23S rRNA structures from forming. This chain is Ribosomal large subunit pseudouridine synthase D, found in Escherichia coli (strain K12).